The primary structure comprises 359 residues: E3 ubiquitin-protein ligase RNF146 (359 aa).

The segment at 37–75 adopts an RING-type zinc-finger fold; it reads CAICLQTCVHPVSLPCKHVFCYLCVKGASWLGKRCALCR. Residues Lys85 and Lys95 each participate in a glycyl lysine isopeptide (Lys-Gly) (interchain with G-Cter in ubiquitin) cross-link. Residues 92 to 168 enclose the WWE domain; it reads EELKAASRGN…EHGRRRKIKR (77 aa). Residues Tyr108, Arg111, and Trp115 each contribute to the a glycoprotein site. Lys131 participates in a covalent cross-link: Glycyl lysine isopeptide (Lys-Gly) (interchain with G-Cter in ubiquitin). A glycoprotein contacts are provided by Tyr145, Gln154, Arg164, and Lys176. Lys176 is covalently cross-linked (Glycyl lysine isopeptide (Lys-Gly) (interchain with G-Cter in ubiquitin)). Positions 254 to 359 are disordered; that stretch reads GDNTAERSHR…PDGQCTVTEV (106 aa). The segment covering 284 to 298 has biased composition (acidic residues); the sequence is SIEETESDASSDSED. Residues Ser290 and Ser294 each carry the phosphoserine modification. The segment covering 306–323 has biased composition (polar residues); the sequence is HSLTQQRLLVSNANQTVP.

Can form homooligomers. Interacts with PARsylated AXIN1, AXIN2, BLZF1, CASC3, H1-2, IPO7, LIG3, NCL, PARP1, XRCC1, XRCC5 and XRCC6. Interacts with DDB1, DHX15, IQGAP1, LRPPRC, PARP2, PRKDC, RUVBL2, TNKS1 and TNKS2. Binding often leads to interactor ubiquitination, in the presence of the appropriate E1 and E2 enzymes, and proteasomal degradation. Ubiquitinated; autoubiquitinated. Polyubiquitinated in the presence of UBE2D1, UBE2D2 and UBE2D3. Multimonoubiquitinated in the presence of UBE2E1. Not ubiquitinated in the presence of UBE2H, CDC34, UBE2L3, UBE2L6, nor UBE2C. In the absence of PAR, autoubiquitination occurs on Lys-85, Lys-95 and Lys-176 via 'Lys-11' and 'Lys-48' ubiquitin linkages. In the presence of PAR, Lys-131 and Lys-176 are ubiquitinated via 'Lys-6', 'Lys-33' and 'Lys-48' ubiquitin linkages. Autoubiquitination is enhanced upon PAR-binding. Ubiquitously expressed. Up-regulated in brains from patients with Alzheimer disease.

The protein resides in the cytoplasm. The protein localises to the cytosol. Its subcellular location is the nucleus. It carries out the reaction S-ubiquitinyl-[E2 ubiquitin-conjugating enzyme]-L-cysteine + [acceptor protein]-L-lysine = [E2 ubiquitin-conjugating enzyme]-L-cysteine + N(6)-ubiquitinyl-[acceptor protein]-L-lysine.. Its pathway is protein modification; protein ubiquitination. Its function is as follows. E3 ubiquitin-protein ligase that specifically binds poly-ADP-ribosylated (PARsylated) proteins and mediates their ubiquitination and subsequent degradation. May regulate many important biological processes, such as cell survival and DNA damage response. Acts as an activator of the Wnt signaling pathway by mediating the ubiquitination of PARsylated AXIN1 and AXIN2, 2 key components of the beta-catenin destruction complex. Acts in cooperation with tankyrase proteins (TNKS and TNKS2), which mediate PARsylation of target proteins AXIN1, AXIN2, BLZF1, CASC3, TNKS and TNKS2. Recognizes and binds tankyrase-dependent PARsylated proteins via its WWE domain and mediates their ubiquitination, leading to their degradation. Different ubiquitin linkage types have been observed: TNKS2 undergoes ubiquitination at 'Lys-48' and 'Lys-63', while AXIN1 is only ubiquitinated at 'Lys-48'. May regulate TNKS and TNKS2 subcellular location, preventing aggregation at a centrosomal location. Neuroprotective protein. Protects the brain against N-methyl-D-aspartate (NMDA) receptor-mediated glutamate excitotoxicity and ischemia, by interfering with PAR-induced cell death, called parthanatos. Prevents nuclear translocation of AIFM1 in a PAR-binding dependent manner. Does not affect PARP1 activation. Protects against cell death induced by DNA damaging agents, such as N-methyl-N-nitro-N-nitrosoguanidine (MNNG) and rescues cells from G1 arrest. Promotes cell survival after gamma-irradiation. Facilitates DNA repair. This chain is E3 ubiquitin-protein ligase RNF146 (RNF146), found in Homo sapiens (Human).